A 166-amino-acid chain; its full sequence is MNYGNNGGGQWQPRGNNNWRPQGRGRGGGGWKGNDNRGGYRGGSSNDGGWSNFRDDGNLNFASPYQANRGNFRGNYRGGGGGGGGNQNNYGNRGRGRGGFDRGRGGGGGGNKNFGPIDANKCIIPSMWNNPWDALEKEYEQEYGVAITEKVTDPSPSPSSAEETTA.

Gly residues-rich tracts occupy residues 1 to 10 (MNYGNNGGGQ) and 76 to 86 (YRGGGGGGGGN). Positions 1-117 (MNYGNNGGGQ…GGGNKNFGPI (117 aa)) are disordered.

This is an uncharacterized protein from Caenorhabditis elegans.